Consider the following 81-residue polypeptide: Acyl carrier protein (81 aa).

The region spanning 4–79 (AEIKDKVYDI…QAIDYIVNKK (76 aa)) is the Carrier domain. Ser-39 is modified (O-(pantetheine 4'-phosphoryl)serine).

It belongs to the acyl carrier protein (ACP) family. 4'-phosphopantetheine is transferred from CoA to a specific serine of apo-ACP by AcpS. This modification is essential for activity because fatty acids are bound in thioester linkage to the sulfhydryl of the prosthetic group.

It is found in the cytoplasm. Its pathway is lipid metabolism; fatty acid biosynthesis. Its function is as follows. Carrier of the growing fatty acid chain in fatty acid biosynthesis. The protein is Acyl carrier protein of Chlorobaculum tepidum (strain ATCC 49652 / DSM 12025 / NBRC 103806 / TLS) (Chlorobium tepidum).